The following is a 417-amino-acid chain: Serine hydroxymethyltransferase (417 aa).

(6S)-5,6,7,8-tetrahydrofolate-binding positions include leucine 121 and 125–127 (GHL). An N6-(pyridoxal phosphate)lysine modification is found at lysine 230. 355-357 (SPF) provides a ligand contact to (6S)-5,6,7,8-tetrahydrofolate.

The protein belongs to the SHMT family. Homodimer. It depends on pyridoxal 5'-phosphate as a cofactor.

Its subcellular location is the cytoplasm. It catalyses the reaction (6R)-5,10-methylene-5,6,7,8-tetrahydrofolate + glycine + H2O = (6S)-5,6,7,8-tetrahydrofolate + L-serine. It functions in the pathway one-carbon metabolism; tetrahydrofolate interconversion. Its pathway is amino-acid biosynthesis; glycine biosynthesis; glycine from L-serine: step 1/1. Its function is as follows. Catalyzes the reversible interconversion of serine and glycine with tetrahydrofolate (THF) serving as the one-carbon carrier. This reaction serves as the major source of one-carbon groups required for the biosynthesis of purines, thymidylate, methionine, and other important biomolecules. Also exhibits THF-independent aldolase activity toward beta-hydroxyamino acids, producing glycine and aldehydes, via a retro-aldol mechanism. In Legionella pneumophila subsp. pneumophila (strain Philadelphia 1 / ATCC 33152 / DSM 7513), this protein is Serine hydroxymethyltransferase.